The chain runs to 1070 residues: Carbamoyl phosphate synthase large chain (1070 aa).

The tract at residues 1-399 is carboxyphosphate synthetic domain; sequence MPKREDIKKV…SLLKAFKSLD (399 aa). The ATP site is built by arginine 129, arginine 169, glycine 175, glycine 176, glutamate 208, valine 210, glutamate 215, glycine 241, valine 242, histidine 243, glutamine 284, and glutamate 296. The ATP-grasp 1 domain occupies 133–325; sequence KETMLRIGEK…IARVTAKIAI (193 aa). Residues glutamine 284, glutamate 296, and asparagine 298 each contribute to the Mg(2+) site. Residues glutamine 284, glutamate 296, and asparagine 298 each coordinate Mn(2+). Residues 400–540 form an oligomerization domain region; sequence IDSQLGNKRW…YSTYEDTCET (141 aa). The carbamoyl phosphate synthetic domain stretch occupies residues 541–931; sequence NPTDRKKILI…YKAELAADNL (391 aa). Residues 672 to 863 enclose the ATP-grasp 2 domain; that stretch reads YVLMQKFGIL…LAKIAARVIA (192 aa). Arginine 708, aspartate 747, leucine 749, glutamate 754, glycine 779, valine 780, histidine 781, serine 782, glutamine 822, and glutamate 834 together coordinate ATP. Mg(2+)-binding residues include glutamine 822, glutamate 834, and asparagine 836. Mn(2+) contacts are provided by glutamine 822, glutamate 834, and asparagine 836. In terms of domain architecture, MGS-like spans 930–1070; it reads NLLPLTGKVF…INEYHKEMGL (141 aa). Residues 932-1070 form an allosteric domain region; that stretch reads LPLTGKVFLS…INEYHKEMGL (139 aa).

It belongs to the CarB family. As to quaternary structure, composed of two chains; the small (or glutamine) chain promotes the hydrolysis of glutamine to ammonia, which is used by the large (or ammonia) chain to synthesize carbamoyl phosphate. Tetramer of heterodimers (alpha,beta)4. Requires Mg(2+) as cofactor. The cofactor is Mn(2+).

The enzyme catalyses hydrogencarbonate + L-glutamine + 2 ATP + H2O = carbamoyl phosphate + L-glutamate + 2 ADP + phosphate + 2 H(+). It catalyses the reaction hydrogencarbonate + NH4(+) + 2 ATP = carbamoyl phosphate + 2 ADP + phosphate + 2 H(+). The protein operates within amino-acid biosynthesis; L-arginine biosynthesis; carbamoyl phosphate from bicarbonate: step 1/1. Its pathway is pyrimidine metabolism; UMP biosynthesis via de novo pathway; (S)-dihydroorotate from bicarbonate: step 1/3. In terms of biological role, large subunit of the glutamine-dependent carbamoyl phosphate synthetase (CPSase). CPSase catalyzes the formation of carbamoyl phosphate from the ammonia moiety of glutamine, carbonate, and phosphate donated by ATP, constituting the first step of 2 biosynthetic pathways, one leading to arginine and/or urea and the other to pyrimidine nucleotides. The large subunit (synthetase) binds the substrates ammonia (free or transferred from glutamine from the small subunit), hydrogencarbonate and ATP and carries out an ATP-coupled ligase reaction, activating hydrogencarbonate by forming carboxy phosphate which reacts with ammonia to form carbamoyl phosphate. The sequence is that of Carbamoyl phosphate synthase large chain from Methanosarcina acetivorans (strain ATCC 35395 / DSM 2834 / JCM 12185 / C2A).